Here is a 507-residue protein sequence, read N- to C-terminus: Aromatase (507 aa).

Cysteine 436 is a binding site for heme.

The protein belongs to the cytochrome P450 family. It depends on heme as a cofactor.

The protein localises to the membrane. It catalyses the reaction testosterone + 3 reduced [NADPH--hemoprotein reductase] + 3 O2 = 17beta-estradiol + formate + 3 oxidized [NADPH--hemoprotein reductase] + 4 H2O + 4 H(+). The catalysed reaction is androst-4-ene-3,17-dione + 3 reduced [NADPH--hemoprotein reductase] + 3 O2 = estrone + formate + 3 oxidized [NADPH--hemoprotein reductase] + 4 H2O + 4 H(+). Its function is as follows. Catalyzes the formation of aromatic C18 estrogens from C19 androgens. This Gallus gallus (Chicken) protein is Aromatase (CYP19A1).